The following is a 236-amino-acid chain: Osmoprotectant import permease protein OsmY (236 aa).

The next 6 membrane-spanning stretches (helical) occupy residues 9-29, 47-67, 95-115, 126-146, 180-200, and 207-227; these read VLGF…GIGL, LMLV…SGIL, VLAL…VALF, TYAG…GIGM, PLAF…GIYL, and ILGA…LAWF. An ABC transmembrane type-1 domain is found at 43–224; it reads GQRHLMLVFT…LFALILDTLL (182 aa).

It belongs to the binding-protein-dependent transport system permease family. In terms of assembly, the complex is composed of two ATP-binding proteins (OsmV), two transmembrane proteins (OsmW and OsmY) and a solute-binding protein (OsmX).

The protein localises to the cell inner membrane. Part of the OsmU ABC transporter complex, which is involved in the uptake of osmoprotectants such as choline-O-sulfate and glycine betaine. Probably responsible for the translocation of the substrate across the membrane. This Salmonella typhimurium (strain LT2 / SGSC1412 / ATCC 700720) protein is Osmoprotectant import permease protein OsmY (osmY).